The chain runs to 312 residues: Acetyl-coenzyme A carboxylase carboxyl transferase subunit beta (312 aa).

Residues 1-52 are disordered; it reads MEMDTAVENPAVEKNGQPTPSSTSTATDAAPTPNAPNRPAPNTAGNRKRGVP. Residues 18–32 are compositionally biased toward low complexity; that stretch reads PTPSSTSTATDAAPT. The CoA carboxyltransferase N-terminal domain maps to 55 to 312; that stretch reads VWRKCDSCGA…IATAIDYCGK (258 aa). 4 residues coordinate Zn(2+): C59, C62, C78, and C81. Residues 59–81 form a C4-type zinc finger; that stretch reads CDSCGASLFYKEVQQRLNVCPQC.

The protein belongs to the AccD/PCCB family. In terms of assembly, acetyl-CoA carboxylase is a heterohexamer composed of biotin carboxyl carrier protein (AccB), biotin carboxylase (AccC) and two subunits each of ACCase subunit alpha (AccA) and ACCase subunit beta (AccD). Zn(2+) is required as a cofactor.

It localises to the cytoplasm. It carries out the reaction N(6)-carboxybiotinyl-L-lysyl-[protein] + acetyl-CoA = N(6)-biotinyl-L-lysyl-[protein] + malonyl-CoA. It functions in the pathway lipid metabolism; malonyl-CoA biosynthesis; malonyl-CoA from acetyl-CoA: step 1/1. Functionally, component of the acetyl coenzyme A carboxylase (ACC) complex. Biotin carboxylase (BC) catalyzes the carboxylation of biotin on its carrier protein (BCCP) and then the CO(2) group is transferred by the transcarboxylase to acetyl-CoA to form malonyl-CoA. This is Acetyl-coenzyme A carboxylase carboxyl transferase subunit beta from Rhodopirellula baltica (strain DSM 10527 / NCIMB 13988 / SH1).